A 355-amino-acid chain; its full sequence is Uroporphyrinogen decarboxylase (355 aa).

Residues 27–31 (RQAGR), aspartate 77, tyrosine 154, threonine 209, and histidine 328 each bind substrate.

Belongs to the uroporphyrinogen decarboxylase family. As to quaternary structure, homodimer.

It is found in the cytoplasm. The catalysed reaction is uroporphyrinogen III + 4 H(+) = coproporphyrinogen III + 4 CO2. It functions in the pathway porphyrin-containing compound metabolism; protoporphyrin-IX biosynthesis; coproporphyrinogen-III from 5-aminolevulinate: step 4/4. Its function is as follows. Catalyzes the decarboxylation of four acetate groups of uroporphyrinogen-III to yield coproporphyrinogen-III. The chain is Uroporphyrinogen decarboxylase from Colwellia psychrerythraea (strain 34H / ATCC BAA-681) (Vibrio psychroerythus).